The primary structure comprises 217 residues: Large ribosomal subunit protein eL6 (217 aa).

It belongs to the eukaryotic ribosomal protein eL6 family. As to quaternary structure, component of the large ribosomal subunit. May bind IPO9 with low affinity.

The protein resides in the cytoplasm. It is found in the cytosol. The protein localises to the rough endoplasmic reticulum. Component of the large ribosomal subunit. This Caenorhabditis elegans protein is Large ribosomal subunit protein eL6 (rpl-6).